The primary structure comprises 428 residues: A-kinase anchor protein 5 (428 aa).

The interval 1-170 is essential to the intracellular anchoring function; it reads MEITVSEIQV…VTKTQTQSDD (170 aa). Disordered regions lie at residues 1–207 and 237–313; these read MEIT…SPGE and LEEK…TELS. Residues 10 to 32 show a composition bias toward basic and acidic residues; the sequence is VESKDETRSAEVRPQDERQEEKA. The S-palmitoyl cysteine moiety is linked to residue Cys36. Positions 37–48 are enriched in basic residues; the sequence is FKRRKKAAKAMK. Basic and acidic residues predominate over residues 57 to 68; sequence DAAKKCPPEARA. Positions 76–96 match the AKAP CaM-binding motif; the sequence is GGAWDSIKRLVTRRKRSESSK. Position 87 is a phosphothreonine; by PKC (Thr87). Residue Ser92 is modified to Phosphoserine; by PKA. Ser94 carries the phosphoserine; by PKC modification. Cys129 is lipidated: S-palmitoyl cysteine. Positions 133–156 are enriched in basic and acidic residues; sequence SKGEKRSNHSKIIEDSDRSVKVQE. Polar residues predominate over residues 161-170; the sequence is VTKTQTQSDD. Basic and acidic residues-rich tracts occupy residues 171–191 and 290–311; these read QATK…KGDD and PDWK…KDTE. The interval 389–410 is RII-beta subunit binding domain; that stretch reads YETLLIETASSLVKNAIQLSIE. The segment at 411–428 is tethers NFATC2 to CRAC channels; that stretch reads QLVNEMASDDNTINNRLQ.

In terms of assembly, binding protein for dimer of the RII-beta regulatory subunit of cAMP-dependent protein kinase (PKA) and also for the protein kinase C (PKC) and the phosphatase calcineurin (PP2B). Each enzyme is inhibited when bound to the anchoring protein. Also binds the beta2-adrenergic receptor. Part of a complex containing AKAP5, ADCY5, ADCY6 and PDE4C. Interacts with ADCY8, and enhances its phosphorylation at lipid rafts. Interacts with ORAI1 (isoform alpha) (via N-terminus) upon store depletion and in response to LTC4. Does not interact with ORAI2 and ORAI3 paralogs. Interacts (via leucine zipper domain) with NFATC2/NFAT1. Interacts with calmodulin; the interaction is calcium-independent. Interacts with KCNQ2; the interaction may help KCNQ2 channel complex to retain calcium-bound calmodulin. Post-translationally, palmitoylated. Palmitoylation at Cys-36 and Cys-129 play a key role in the targeting of AKAP5 to lipid rafts. Palmitoylation by ZDHHC2 is required for AKAP5 function in LTP-stimulated recycling endosome exocytosis. As to expression, predominantly in brain, and to a lesser extent in adrenal medulla, lung and anterior pituitary.

It localises to the postsynaptic recycling endosome membrane. Its function is as follows. Multivalent scaffold protein that anchors the cAMP-dependent protein kinase/PKA to cytoskeletal and/or organelle-associated proteins, targeting the signal carried by cAMP to specific intracellular effectors. Association with the beta2-adrenergic receptor (beta2-AR) not only regulates beta2-AR signaling pathway, but also the activation by PKA by switching off the beta2-AR signaling cascade. Plays a role in long term synaptic potentiation by regulating protein trafficking from the dendritic recycling endosomes to the plasma membrane and controlling both structural and functional plasticity at excitatory synapses. Associates with ORAI1 pore-forming subunit of CRAC channels in Ca(2+) signaling microdomains where it recruits NFATC2/NFAT1 and couples store-operated Ca(2+) influx to calmodulin and calcineurin signaling and activation of NFAT-dependent transcriptional responses. This chain is A-kinase anchor protein 5 (AKAP5), found in Bos taurus (Bovine).